Consider the following 341-residue polypeptide: UPF0324 membrane protein SMU_2059c (341 aa).

11 helical membrane passes run 7 to 24 (KLSGLVLCFLIALPAWFL), 28 to 47 (FPLVGAPVFAIFLGMLLAIF), 68 to 85 (FAVVLLGFGLNLSQVLTV), 90 to 107 (LPIIVATISSSLLLAFLL), 120 to 142 (LVGVGSSICGGSAIAATAPVIQA), 147 to 169 (IAQSISVIFLFNILAALIFPTLG), 178 to 200 (GFALFAGTAVNDTSSVTATAAAW), 211 to 233 (GATIVKLTRTLAIIPITLGLSFY), 254 to 276 (VFPMFILYFILASIITTILTALG), 291 to 310 (FCIVMAMGAIGLNTNIVKLV), and 317 to 339 (IVLGASCWIVITLVSLGMQHLLG).

The protein belongs to the UPF0324 family.

The protein resides in the cell membrane. This is UPF0324 membrane protein SMU_2059c from Streptococcus mutans serotype c (strain ATCC 700610 / UA159).